The following is a 431-amino-acid chain: 3-phosphoshikimate 1-carboxyvinyltransferase (431 aa).

Residues K21, S22, and R26 each contribute to the 3-phosphoshikimate site. K21 is a phosphoenolpyruvate binding site. 2 residues coordinate phosphoenolpyruvate: G94 and R122. 4 residues coordinate 3-phosphoshikimate: S167, Q169, D315, and K342. Q169 provides a ligand contact to phosphoenolpyruvate. The active-site Proton acceptor is D315. 2 residues coordinate phosphoenolpyruvate: R346 and R388.

This sequence belongs to the EPSP synthase family. Monomer.

The protein localises to the cytoplasm. It carries out the reaction 3-phosphoshikimate + phosphoenolpyruvate = 5-O-(1-carboxyvinyl)-3-phosphoshikimate + phosphate. It participates in metabolic intermediate biosynthesis; chorismate biosynthesis; chorismate from D-erythrose 4-phosphate and phosphoenolpyruvate: step 6/7. Catalyzes the transfer of the enolpyruvyl moiety of phosphoenolpyruvate (PEP) to the 5-hydroxyl of shikimate-3-phosphate (S3P) to produce enolpyruvyl shikimate-3-phosphate and inorganic phosphate. This Pelotomaculum thermopropionicum (strain DSM 13744 / JCM 10971 / SI) protein is 3-phosphoshikimate 1-carboxyvinyltransferase.